We begin with the raw amino-acid sequence, 667 residues long: Leucine aminopeptidase 2 (667 aa).

A peptide is bound by residues 188–190 and 318–323; these read QCQ and PYGGME. H347 contacts Zn(2+). Catalysis depends on E348, which acts as the Proton acceptor. H351 and E370 together coordinate Zn(2+). Y436 acts as the Proton donor in catalysis.

It belongs to the peptidase M1 family. Requires Zn(2+) as cofactor.

It is found in the cytoplasm. The protein resides in the nucleus. It catalyses the reaction an epoxide + H2O = an ethanediol. Functionally, aminopeptidase that preferentially cleaves di- and tripeptides. Also has low epoxide hydrolase activity (in vitro). Can hydrolyze the epoxide leukotriene LTA(4) but it forms preferentially 5,6-dihydroxy-7,9,11,14-eicosatetraenoic acid rather than the cytokine leukotriene B(4) as the product compared to the homologous mammalian enzyme (in vitro). The polypeptide is Leucine aminopeptidase 2 (ara-1) (Neurospora crassa (strain ATCC 24698 / 74-OR23-1A / CBS 708.71 / DSM 1257 / FGSC 987)).